We begin with the raw amino-acid sequence, 1363 residues long: MSPKGVGHSKVEESAVQVAVRVRPLLPKEILHSHESCITSDPEERRVTLGNDRHFHCDFVFEDGSTQEEVYTNCVQPLIEAFFHGFNATVSAYGQTGSGKTYTIGEASISAFRDDEQGIIPRAVAEIFKLLDENDLIDFSVRVSYMEVYKEVFRDLLEVETASKDIHIREDERGNVVLCGVKECEVEGLDEVLSLLESGKTARHTGATQMNPHSSRSHTIFTVLMEQRRGGSRAANGSVQILSSKFHFVDLAGSERILKTGNTGERLKESIQINSGLLVLGNVIGALGDPKRKGTHIPYRDSKITRILKDSLGGNAKTLMIACISPSSSDFDESLNTLNYAKRARNIQNRATVNCRGEPDRIEGLELQIKALRRALENRQRSETRIIARSDPEKRLRPFEVDVRKLQAESAHYRTCTDSAYRLLTELQGEGTLNAGQILRVKEWLCGVEEERSGLTSASGLDSGIESSSTEDSTALKRRQAVLNNQDLVKEDWRGEREDYTSQLQAQIQQLEQENTDFLVALEDAMEQYKQQSDKLQEQQDLIAELHSLLAQPGGAGFLHLKQRPHTAPINSLLQTPDRLTPPCDSDVGRSLARQLDVGASVDSSSYSEQTQWDGTHGNTHCESSRKLNRDEDGHMQTTRDKRKSINVTWTKKDIAIPQGPFGGTRTALPQTLGLCHPLGMQFNRRTSNSSIGESSVWESVRGFGGEFCSDRGLLQAQQKIRELSITIRMKEELIKELVKTGKDAQAMNRQYSRKISELEAEAEQARVELTEAQKQLQELEVQGGRDAVDRSKAQECRRKIAAAQSKVQVLKQKQRDTAQLASLSAQSERRVQELERNVQNMKQQQDLLQRRLREESQQKRRLETEMQKGKHRVKELEIKNEQQQKILRIKTEEIAAFQRQRRSGSNGSVVSLEEQQKIEEQKRWLDEEMEKVLDQRRGLEDLEGELTKREEILAKKEALLWERSGLESKKLRSSQALSQDLLTLSSRIESLERELTERNGLLRSGSAQDSQQIRQEISNLRQEKELLLKQRVELDDKLRQGNLLSPEEERTLFQLDEAIEALDAAIEYKNEAITQRQRQLRASGSMLTQWEMNLMAKLTYLSASETRALLCKYFDKVVSLREEERRLQMALAELELRVEEQQNLVGWLEAALERQQLEADRRLTQQQKEHERNIQLLLQQCREQMDEGLAGRLRQYEGLIHNLSKELNFCKIANQELNIKLREMCGPVNLTGEQCKGLNCDSLLLAGAQSRVAEDVKPIIDAERVQKSREEMREPVNAPLPATWRRSSLPTEDQYTMEELRQRAACELPNNRIVQPGMNSTHWSGSTSLPVTRPRREPRRSSLNTAPLYSSSAIIDVRRNPV.

The region spanning 15 to 347 (AVQVAVRVRP…LNYAKRARNI (333 aa)) is the Kinesin motor domain. ATP is bound at residue 94 to 101 (GQTGSGKT). Coiled-coil stretches lie at residues 358–385 (EPDRIEGLELQIKALRRALENRQRSETR) and 491–552 (EDWR…LLAQ). Residues 603-622 (DSSSYSEQTQWDGTHGNTHC) are compositionally biased toward polar residues. The tract at residues 603-642 (DSSSYSEQTQWDGTHGNTHCESSRKLNRDEDGHMQTTRDK) is disordered. A compositionally biased stretch (basic and acidic residues) spans 623–640 (ESSRKLNRDEDGHMQTTR). 2 coiled-coil regions span residues 714-1068 (LLQA…AAIE) and 1116-1225 (DKVV…LREM). The interval 1314–1346 (IVQPGMNSTHWSGSTSLPVTRPRREPRRSSLNT) is disordered. Residues 1318-1331 (GMNSTHWSGSTSLP) show a composition bias toward polar residues.

It belongs to the TRAFAC class myosin-kinesin ATPase superfamily. Kinesin family. KIF27 subfamily. As to quaternary structure, binds microtubules. Interacts with gli1 and sufu.

Its subcellular location is the cytoplasm. The protein resides in the cytoskeleton. It localises to the cell projection. The protein localises to the cilium. Functionally, acts downstream of smo as an intracellular repressor of hedgehog signaling pathway, mainly through the suppression of gli1 activity. This negative regulatory effect is enhanced in conjunction with the suppressor of fused (sufu) protein. Positively regulates gli2a activity by promoting its dissociation from sufu. Involved in the regulation of microtubular dynamics. The chain is Kinesin-like protein kif7 (kif7) from Danio rerio (Zebrafish).